Here is a 435-residue protein sequence, read N- to C-terminus: S-phase entry cyclin-5 (435 aa).

Disordered regions lie at residues 36 to 70 and 104 to 126; these read KRAL…NPLS and NDRT…DAAS. Over residues 41–52 the composition is skewed to low complexity; that stretch reads KNDSSSKQQVQD. Over residues 110–124 the composition is skewed to acidic residues; that stretch reads EQEEEEEEEGEDDDA.

It belongs to the cyclin family. Cyclin AB subfamily.

Its function is as follows. Required for efficient progression through S phase and possibly for the normal progression through meiosis. Interacts with CDC28. In Saccharomyces cerevisiae (strain ATCC 204508 / S288c) (Baker's yeast), this protein is S-phase entry cyclin-5 (CLB5).